The primary structure comprises 253 residues: MICOS complex subunit mic25 (253 aa).

Residues 1-89 form a disordered region; that stretch reads MGGSESTGRK…GAHKPTAAGV (89 aa). G2 is lipidated: N-myristoyl glycine. Over residues 28–44 the composition is skewed to basic and acidic residues; that stretch reads RLSDEVVNRMKDSDLPS. Positions 48–64 are enriched in low complexity; the sequence is STSAASGTASAPAAFPS. A coiled-coil region spans residues 94-178; sequence AEEDLYRRYE…EQLSSIEKKN (85 aa). The 43-residue stretch at 206–248 folds into the CHCH domain; it reads DPVCMNLQADILKCYSENKQERLNCSNLAKEYRKCVSAAQKNL. 2 short sequence motifs (cx9C motif) span residues 209–219 and 230–240; these read CMNLQADILKC and CSNLAKEYRKC. Disulfide bonds link C209/C240 and C219/C230.

The protein belongs to the MICOS complex subunit Mic19 family. Metazoan Mic25 subfamily. Component of the mitochondrial contact site and cristae organizing system (MICOS) complex (also known as MINOS or MitOS complex).

It localises to the mitochondrion inner membrane. Functionally, component of the MICOS complex, a large protein complex of the mitochondrial inner membrane that plays crucial roles in the maintenance of crista junctions, inner membrane architecture, and formation of contact sites to the outer membrane. In Xenopus tropicalis (Western clawed frog), this protein is MICOS complex subunit mic25 (chchd6).